The primary structure comprises 578 residues: Acyl-CoA ligase AFT1-1 (578 aa).

ATP-binding positions include 210 to 218 (SSGTSGAQK), 350 to 355 (QCYGAT), Asp438, Arg457, and Lys554. An SBD1 region spans residues 281–350 (GVEDLLSIVE…RHHPTWKIKQ (70 aa)). Residues 351 to 413 (CYGATEAGTA…VSSPSLAIGY (63 aa)) are SBD2. Residues 576–578 (SKI) carry the Peroxisomal targeting signal type 1 motif.

The protein belongs to the ATP-dependent AMP-binding enzyme family.

The protein localises to the peroxisome. Its pathway is mycotoxin biosynthesis. In terms of biological role, acyl-CoA ligase; part of the gene clusters that mediate the biosynthesis of the host-selective toxins (HSTs) AF-toxins responsible for Alternaria black spot of strawberry disease by the strawberry pathotype. AF-toxin I and III are valine derivatives of 2,3-dyhydroxy-isovaleric acid and 2-hydroxy-isovaleric acid respectively, while AF II is an isoleucine derivative of 2-hydroxy-valeric acid. These derivatives are bound to a 9,10-epoxy-8-hydroxy-9-methyl-decatrienoic acid (EDA) moiety. On cellular level, AF-toxins affect plasma membrane of susceptible cells and cause a sudden increase in loss of K(+) after a few minutes of toxin treatment. The aldo-keto reductase AFTS1 catalyzes the conversion of 2-keto-isovaleric acid (2-KIV) to 2-hydroxy-isovaleric acid (2-HIV) by reduction of its ketone to an alcohol. The acyl-CoA ligase AFT1, the hydrolase AFT2 and the enoyl-CoA hydratases AFT3 and AFT6, but also the polyketide synthase AFT9, the acyl-CoA dehydrogenase AFT10, the cytochrome P450 monooxygenase AFT11 and the oxidoreductase AFT12 are all involved in the biosynthesis of the AK-, AF- and ACT-toxin common EDA structural moiety. The exact role of each enzyme, and of additional enzymes identified within the AF-toxin clusters have still to be determined. The sequence is that of Acyl-CoA ligase AFT1-1 from Alternaria alternata (Alternaria rot fungus).